We begin with the raw amino-acid sequence, 249 residues long: Proteasome activator complex subunit 1 (249 aa).

The segment at 60–102 (PLDIPVPDPVKEKEKEERKKQQEKEEKDEKKKGDEDDKGPPCG) is disordered. Residues 68-98 (PVKEKEKEERKKQQEKEEKDEKKKGDEDDKG) show a composition bias toward basic and acidic residues.

It belongs to the PA28 family. Heterodimer of PSME1 and PSME2, which forms a hexameric ring. PSME1 can form homoheptamers.

In terms of biological role, implicated in immunoproteasome assembly and required for efficient antigen processing. The PA28 activator complex enhances the generation of class I binding peptides by altering the cleavage pattern of the proteasome. In Rattus norvegicus (Rat), this protein is Proteasome activator complex subunit 1 (Psme1).